The sequence spans 476 residues: Cytosolic iron-sulfur assembly component 3 (476 aa).

Alanine 2 is subject to N-acetylalanine. The [4Fe-4S] cluster site is built by cysteine 24, cysteine 71, cysteine 74, cysteine 77, cysteine 190, cysteine 246, cysteine 395, and cysteine 399.

Belongs to the NARF family. As to quaternary structure, external component of the CIA complex. In the CIA complex, interacts directly with CIAO1 and MMS19.

Functionally, component of the cytosolic iron-sulfur protein assembly (CIA) complex, a multiprotein complex that mediates the incorporation of iron-sulfur cluster into extramitochondrial Fe/S proteins. Seems to negatively regulate the level of HIF1A expression, although this effect could be indirect. The protein is Cytosolic iron-sulfur assembly component 3 of Bos taurus (Bovine).